Reading from the N-terminus, the 205-residue chain is ATP synthase subunit b (205 aa).

The signal sequence occupies residues 1 to 27 (MKLNKKHLVAILSVLSLSIIVVPLLTS). Residue Cys28 is the site of N-palmitoyl cysteine attachment. Cys28 is lipidated: S-diacylglycerol cysteine. The helical transmembrane segment at 48-68 (VWVFIAQVIAMCVVFSLVLWL) threads the bilayer.

This sequence belongs to the ATPase B chain family. F-type ATPases have 2 components, F(1) - the catalytic core - and F(0) - the membrane proton channel. F(1) has five subunits: alpha(3), beta(3), gamma(1), delta(1), epsilon(1). F(0) has three main subunits: a(1), b(2) and c(10-14). The alpha and beta chains form an alternating ring which encloses part of the gamma chain. F(1) is attached to F(0) by a central stalk formed by the gamma and epsilon chains, while a peripheral stalk is formed by the delta and b chains.

Its subcellular location is the cell membrane. In terms of biological role, f(1)F(0) ATP synthase produces ATP from ADP in the presence of a proton or sodium gradient. F-type ATPases consist of two structural domains, F(1) containing the extramembraneous catalytic core and F(0) containing the membrane proton channel, linked together by a central stalk and a peripheral stalk. During catalysis, ATP synthesis in the catalytic domain of F(1) is coupled via a rotary mechanism of the central stalk subunits to proton translocation. Component of the F(0) channel, it forms part of the peripheral stalk, linking F(1) to F(0). The sequence is that of ATP synthase subunit b from Ureaplasma parvum serovar 3 (strain ATCC 27815 / 27 / NCTC 11736).